The sequence spans 557 residues: Copine-6 (557 aa).

C2 domains follow at residues 2 to 127 (SDPE…TKPL) and 134 to 263 (TAGK…MQWD). Ca(2+) is bound by residues aspartate 167, aspartate 173, aspartate 229, aspartate 231, and aspartate 237. The interval 244–303 (STFQEMQEGTANPGQEMQWDCINPKYRDKKKNYKSSGTVVLAQCTVEKVHTFLDYIMGGC) is linker region. The region spanning 306–526 (SFTVAIDFTA…ALAKCVLAEV (221 aa)) is the VWFA domain.

The protein belongs to the copine family. As to quaternary structure, interacts (via second C2 domain) with OS9 (via C-terminus); this interaction occurs in a calcium-dependent manner in vitro. May interact with NECAB1. Ca(2+) serves as cofactor. Widely expressed in the brain. Expressed weakly in the kidney, liver and fetal heart. Expressed in melanocytes.

It is found in the cytoplasm. The protein resides in the cell membrane. The protein localises to the endosome. Its subcellular location is the cytoplasmic vesicle. It localises to the clathrin-coated vesicle. It is found in the perikaryon. The protein resides in the cell projection. The protein localises to the dendrite. In terms of biological role, calcium-dependent phospholipid-binding protein that plays a role in calcium-mediated intracellular processes. Binds phospholipid membranes in a calcium-dependent manner. Plays a role in dendrite formation by melanocytes. In Homo sapiens (Human), this protein is Copine-6.